A 446-amino-acid polypeptide reads, in one-letter code: Tubulin beta-1 chain (446 aa).

GTP-binding residues include Gln11, Glu69, Ser138, Gly142, Thr143, Gly144, Asn204, and Asn226. Residue Glu69 participates in Mg(2+) binding. A disordered region spans residues 422–446 (YQQYQDATADEEGEYEDEEEGDLQD). Over residues 429–446 (TADEEGEYEDEEEGDLQD) the composition is skewed to acidic residues.

It belongs to the tubulin family. Dimer of alpha and beta chains. A typical microtubule is a hollow water-filled tube with an outer diameter of 25 nm and an inner diameter of 15 nM. Alpha-beta heterodimers associate head-to-tail to form protofilaments running lengthwise along the microtubule wall with the beta-tubulin subunit facing the microtubule plus end conferring a structural polarity. Microtubules usually have 13 protofilaments but different protofilament numbers can be found in some organisms and specialized cells. Mg(2+) serves as cofactor. As to expression, found in areas of rapidly dividing tissues.

It is found in the cytoplasm. The protein resides in the cytoskeleton. Functionally, tubulin is the major constituent of microtubules, a cylinder consisting of laterally associated linear protofilaments composed of alpha- and beta-tubulin heterodimers. Microtubules grow by the addition of GTP-tubulin dimers to the microtubule end, where a stabilizing cap forms. Below the cap, tubulin dimers are in GDP-bound state, owing to GTPase activity of alpha-tubulin. This Zea mays (Maize) protein is Tubulin beta-1 chain (TUBB1).